The following is a 349-amino-acid chain: Insulin gene enhancer protein ISL-1 (349 aa).

2 LIM zinc-binding domains span residues 17–70 and 79–133; these read CVGC…CKRD and CAKC…RADH. The segment at residues 181–240 is a DNA-binding region (homeobox); it reads TTRVRTVLNEKQLHTLRTCYAANPRPDALMKEQLVEMTGLSPRVIRVWFQNKRCKDKKRS. Residues 312 to 349 form a disordered region; that stretch reads VNFSEGGPGSNSTGSEVASMSSQLPDTPNSMVASPIEA. Residues 321-343 are compositionally biased toward polar residues; sequence SNSTGSEVASMSSQLPDTPNSMV.

It is found in the nucleus. Functionally, acts as a transcriptional regulator. Recognizes and binds to the consensus octamer binding site 5'-ATAATTAA-3' in promoter of target genes. Plays a fundamental role in the gene regulatory network essential for retinal ganglion cell (RGC) differentiation. Binds to insulin gene enhancer sequences. Defines subclasses of motoneurons that segregate into columns in the spinal cord and select distinct axon pathways. Acts in conjunction with LHX1, LHX3 and ISL2. Binds to insulin gene enhancer sequences. Essential for heart development. The protein is Insulin gene enhancer protein ISL-1 (ISL1) of Gallus gallus (Chicken).